A 147-amino-acid polypeptide reads, in one-letter code: Transmembrane protein 210 (147 aa).

The N-terminal stretch at 1–31 is a signal peptide; the sequence is MAPCPQPESCPAGSPLGLICLSLLLIPASAG. Residues 32–47 are Extracellular-facing; it reads TYCECSLGLSREALIA. A helical membrane pass occupies residues 48-68; sequence LIVVLAGVSASCFCALVVVAI. The Cytoplasmic portion of the chain corresponds to 69 to 147; the sequence is GVFRAKGDTC…PPPPPPPLPQ (79 aa). A disordered region spans residues 128 to 147; the sequence is TMTAPLEPPPPPPPPPPLPQ. The segment covering 133-147 has biased composition (pro residues); sequence LEPPPPPPPPPPLPQ.

It localises to the membrane. It is found in the cytoplasmic vesicle. Its subcellular location is the secretory vesicle. The protein localises to the acrosome. The chain is Transmembrane protein 210 (Tmem210) from Mus musculus (Mouse).